A 58-amino-acid chain; its full sequence is Mu-diguetoxin-Dc1b (58 aa).

Cystine bridges form between C12-C26, C20-C40, C25-C54, and C42-C52.

This sequence belongs to the neurotoxin 26 (DTX) family. As to expression, expressed by the venom gland.

Its subcellular location is the secreted. Acts by delaying the inactivation of presynaptic voltage-sensitive sodium channels (Nav). Acts against insects and cause a progressive spastic paralysis. The sequence is that of Mu-diguetoxin-Dc1b from Diguetia canities (Desert bush spider).